Consider the following 557-residue polypeptide: Potassium-transporting ATPase potassium-binding subunit (557 aa).

Transmembrane regions (helical) follow at residues Met-1 to Gly-21, Gln-62 to Leu-82, Ile-132 to Phe-152, Ile-176 to Thr-196, Val-253 to Ile-273, Ala-279 to Ser-299, Ile-371 to Phe-391, Leu-415 to Leu-435, Val-482 to Val-502, and Val-528 to Leu-548.

The protein belongs to the KdpA family. The system is composed of three essential subunits: KdpA, KdpB and KdpC.

It is found in the cell membrane. In terms of biological role, part of the high-affinity ATP-driven potassium transport (or Kdp) system, which catalyzes the hydrolysis of ATP coupled with the electrogenic transport of potassium into the cytoplasm. This subunit binds the extracellular potassium ions and delivers the ions to the membrane domain of KdpB through an intramembrane tunnel. This is Potassium-transporting ATPase potassium-binding subunit from Clostridium acetobutylicum (strain ATCC 824 / DSM 792 / JCM 1419 / IAM 19013 / LMG 5710 / NBRC 13948 / NRRL B-527 / VKM B-1787 / 2291 / W).